The following is a 146-amino-acid chain: Putative pre-16S rRNA nuclease (146 aa).

Belongs to the YqgF nuclease family.

It localises to the cytoplasm. Functionally, could be a nuclease involved in processing of the 5'-end of pre-16S rRNA. This Burkholderia pseudomallei (strain 668) protein is Putative pre-16S rRNA nuclease.